Consider the following 181-residue polypeptide: Adenine phosphoribosyltransferase (181 aa).

The protein belongs to the purine/pyrimidine phosphoribosyltransferase family. In terms of assembly, homodimer.

It is found in the cytoplasm. The enzyme catalyses AMP + diphosphate = 5-phospho-alpha-D-ribose 1-diphosphate + adenine. The protein operates within purine metabolism; AMP biosynthesis via salvage pathway; AMP from adenine: step 1/1. In terms of biological role, catalyzes a salvage reaction resulting in the formation of AMP, that is energically less costly than de novo synthesis. The polypeptide is Adenine phosphoribosyltransferase (Vibrio atlanticus (strain LGP32) (Vibrio splendidus (strain Mel32))).